Consider the following 344-residue polypeptide: L-erythro-3,5-diaminohexanoate dehydrogenase (344 aa).

It belongs to the KDD family. In terms of assembly, homodimer.

The catalysed reaction is (3S,5S)-3,5-diaminohexanoate + NAD(+) + H2O = (5S)-5-amino-3-oxohexanoate + NH4(+) + NADH + H(+). It participates in amino-acid degradation; L-lysine degradation via acetate pathway. In terms of biological role, involved in the anaerobic fermentation of lysine. Catalyzes the oxidative deamination of L-erythro-3,5-diaminohexanoate (3,5-DAH) to 3-keto-5-aminohexanoate (KAH). The polypeptide is L-erythro-3,5-diaminohexanoate dehydrogenase (Acetoanaerobium sticklandii (strain ATCC 12662 / DSM 519 / JCM 1433 / CCUG 9281 / NCIMB 10654 / HF) (Clostridium sticklandii)).